A 98-amino-acid chain; its full sequence is DNA-directed RNA polymerase subunit omega (98 aa).

The protein belongs to the RNA polymerase subunit omega family. As to quaternary structure, the RNAP catalytic core consists of 2 alpha, 1 beta, 1 beta' and 1 omega subunit. When a sigma factor is associated with the core the holoenzyme is formed, which can initiate transcription.

It catalyses the reaction RNA(n) + a ribonucleoside 5'-triphosphate = RNA(n+1) + diphosphate. Promotes RNA polymerase assembly. Latches the N- and C-terminal regions of the beta' subunit thereby facilitating its interaction with the beta and alpha subunits. The chain is DNA-directed RNA polymerase subunit omega from Xylella fastidiosa (strain M12).